Consider the following 197-residue polypeptide: RING-H2 finger protein ATL80 (197 aa).

A helical transmembrane segment spans residues 30-50 (LVVILAALLCALICVLGLIAV). An RING-type; atypical zinc finger spans residues 111–153 (CAICLAEFSAGDELRVLPQCGHGFHVACIDTWLGSHSSCPSCR). The interval 168–197 (PGSSSSGLESEPEIEIRIKQGEDDPNSFLP) is disordered.

The protein belongs to the RING-type zinc finger family. ATL subfamily.

The protein resides in the membrane. It carries out the reaction S-ubiquitinyl-[E2 ubiquitin-conjugating enzyme]-L-cysteine + [acceptor protein]-L-lysine = [E2 ubiquitin-conjugating enzyme]-L-cysteine + N(6)-ubiquitinyl-[acceptor protein]-L-lysine.. Its pathway is protein modification; protein ubiquitination. Its function is as follows. May be involved in the early steps of the plant defense signaling pathway. The polypeptide is RING-H2 finger protein ATL80 (ATL80) (Arabidopsis thaliana (Mouse-ear cress)).